Consider the following 482-residue polypeptide: Putative alpha-L-fucosidase (482 aa).

Positions 1-16 (MIFLIFSILFLHLANC) are cleaved as a signal peptide. Residues Asn-182, Asn-343, Asn-359, and Asn-419 are each glycosylated (N-linked (GlcNAc...) asparagine).

It belongs to the glycosyl hydrolase 29 family.

It carries out the reaction an alpha-L-fucoside + H2O = L-fucose + an alcohol. Alpha-L-fucosidase is responsible for hydrolyzing the alpha-1,6-linked fucose joined to the reducing-end N-acetylglucosamine of the carbohydrate moieties of glycoproteins. This Caenorhabditis elegans protein is Putative alpha-L-fucosidase.